A 331-amino-acid chain; its full sequence is N-arachidonyl glycine receptor (331 aa).

Residues Met-1–Leu-26 lie on the Extracellular side of the membrane. The N-linked (GlcNAc...) asparagine glycan is linked to Asn-14. Residues Val-27 to Phe-47 traverse the membrane as a helical segment. At Ser-48 to Thr-56 the chain is on the cytoplasmic side. A helical membrane pass occupies residues Val-57–Phe-77. The Extracellular segment spans residues Arg-78–Gln-95. Cys-94 and Cys-172 are joined by a disulfide. A helical membrane pass occupies residues Ile-96 to Ser-116. The Cytoplasmic portion of the chain corresponds to Ala-117–Ala-138. Residues Val-139–Leu-159 traverse the membrane as a helical segment. At His-160 to Arg-191 the chain is on the extracellular side. The N-linked (GlcNAc...) asparagine glycan is linked to Asn-188. Residues Leu-192–His-212 form a helical membrane-spanning segment. Topologically, residues Asn-213–Arg-232 are cytoplasmic. Residues Ile-233–Ala-253 form a helical membrane-spanning segment. Residues Phe-254 to Gly-268 lie on the Extracellular side of the membrane. A helical membrane pass occupies residues Ala-269–Val-289. Topologically, residues Ser-290–Leu-331 are cytoplasmic. Residue Ser-322 is modified to Phosphoserine.

It belongs to the G-protein coupled receptor 1 family.

Its subcellular location is the cell membrane. It localises to the cytoplasmic vesicle membrane. Its function is as follows. G protein-coupled receptor (GPCR) that plays a role in diverse physiological processes particularly within the immune and nervous systems. Becomes active when triggered by various endogenous ligands including endocannabinoid N-arachidonyl glycine (NAGly), delta-9-tetrahydrocannabinol or resolvin D2/RvD2 derived from the omega-3 fatty acid docosahexaenoic acid (DHA). Upon RvD2 binding, facilitates the resolution of inflammation, aiding in tissue repair and homeostasis. Mechanistically, RvD2 ligation initiates Galphas protein coupling, activation of cAMP-PKA signaling pathway and phosphorylation of STAT3, leading to RvD2-stimulated macrophage phagocytosis. Mediates NAGly-induced process of reorganization of actin filaments and induction of acrosomal exocytosis. Activation by N-arachidonoyl glycine (NAGly) can also induce apoptosis in macrophages. Plays a role in homeostasis of CD8+ subsets of intraepithelial lymphocytes (IELs) (CD8alphaalpha and CD8alphabeta IELs) in small intestine by supporting preferential migration of CD8alphaalpha T-cells to intraepithelial compartment over lamina propria compartment, and by mediating their reconstitution into small intestine after bone marrow transplant. Participates also in hypotensive responses, mediating reduction in intraocular and blood pressure. This Macaca fascicularis (Crab-eating macaque) protein is N-arachidonyl glycine receptor.